Reading from the N-terminus, the 214-residue chain is GTP cyclohydrolase 1 (214 aa).

Zn(2+) contacts are provided by C108, H111, and C179.

It belongs to the GTP cyclohydrolase I family. As to quaternary structure, toroid-shaped homodecamer, composed of two pentamers of five dimers.

It carries out the reaction GTP + H2O = 7,8-dihydroneopterin 3'-triphosphate + formate + H(+). It functions in the pathway cofactor biosynthesis; 7,8-dihydroneopterin triphosphate biosynthesis; 7,8-dihydroneopterin triphosphate from GTP: step 1/1. The sequence is that of GTP cyclohydrolase 1 from Shewanella loihica (strain ATCC BAA-1088 / PV-4).